The chain runs to 198 residues: MDFLNYPEPLADLITGLSRLPGIGPKTAGRLAFYLLQQPQVAENLAETMIRAQREIRQCSLCCNYTDHDPCPICTGEKRERTLLCIVEQPRDVVSLEKTREFKGLYHVLHGVISPLEGVGPEQLTISKLLGRLEGVQEVVMAMNPTVEGEATALYLSRLLKPLGIKVTRIAHGLPVGGDLEYADEITIARALEGRRQI.

Residues Cys59–Cys74 form a C4-type zinc finger. Residues Thr82–Pro175 enclose the Toprim domain.

This sequence belongs to the RecR family.

In terms of biological role, may play a role in DNA repair. It seems to be involved in an RecBC-independent recombinational process of DNA repair. It may act with RecF and RecO. The protein is Recombination protein RecR of Desulfitobacterium hafniense (strain Y51).